The sequence spans 510 residues: 2,3-bisphosphoglycerate-independent phosphoglycerate mutase (510 aa).

The Mn(2+) site is built by aspartate 14 and serine 64. Serine 64 functions as the Phosphoserine intermediate in the catalytic mechanism. Substrate-binding positions include histidine 125, 155 to 156 (RD), arginine 187, arginine 193, 259 to 262 (RADR), and lysine 332. 5 residues coordinate Mn(2+): aspartate 399, histidine 403, aspartate 440, histidine 441, and histidine 459.

This sequence belongs to the BPG-independent phosphoglycerate mutase family. As to quaternary structure, monomer. The cofactor is Mn(2+).

It carries out the reaction (2R)-2-phosphoglycerate = (2R)-3-phosphoglycerate. It participates in carbohydrate degradation; glycolysis; pyruvate from D-glyceraldehyde 3-phosphate: step 3/5. In terms of biological role, catalyzes the interconversion of 2-phosphoglycerate and 3-phosphoglycerate. The sequence is that of 2,3-bisphosphoglycerate-independent phosphoglycerate mutase from Pseudomonas savastanoi pv. phaseolicola (strain 1448A / Race 6) (Pseudomonas syringae pv. phaseolicola (strain 1448A / Race 6)).